The following is a 311-amino-acid chain: Pyrimidine-specific ribonucleoside hydrolase RihA (311 aa).

The active site involves His240.

This sequence belongs to the IUNH family. RihA subfamily.

Its function is as follows. Hydrolyzes cytidine or uridine to ribose and cytosine or uracil, respectively. The sequence is that of Pyrimidine-specific ribonucleoside hydrolase RihA from Klebsiella pneumoniae subsp. pneumoniae (strain ATCC 700721 / MGH 78578).